Reading from the N-terminus, the 290-residue chain is Inositol monophosphatase 2 (290 aa).

Positions 83, 103, 105, and 106 each coordinate Mg(2+). E83 is a binding site for substrate. Substrate is bound by residues 105–108 (IDGT), 207–209 (GSS), Q226, and D233. Mg(2+) is bound at residue D233.

It belongs to the inositol monophosphatase superfamily. As to quaternary structure, homodimer. Mg(2+) serves as cofactor.

The protein localises to the cytoplasm. It carries out the reaction a myo-inositol phosphate + H2O = myo-inositol + phosphate. Its pathway is polyol metabolism; myo-inositol biosynthesis; myo-inositol from D-glucose 6-phosphate: step 2/2. Functionally, can use myo-inositol monophosphates, scylloinositol 1,4-diphosphate, glucose-1-phosphate, beta-glycerophosphate, and 2'-AMP as substrates. Has been implicated as the pharmacological target for lithium Li(+) action in brain. The protein is Inositol monophosphatase 2 (Impa2) of Rattus norvegicus (Rat).